A 423-amino-acid chain; its full sequence is Deferrochelatase (423 aa).

The segment at residues Met1–Ala35 is a signal peptide (tat-type signal). Heme b contacts are provided by residues Gly236 to Ala238, His329, Asn334 to Arg336, and Arg347.

It belongs to the DyP-type peroxidase family. EfeB subfamily. As to quaternary structure, homodimer. Part of a ferrous iron transporter composed of EfeU, EfeO and EfeB. Heme b is required as a cofactor. Predicted to be exported by the Tat system. The position of the signal peptide cleavage has not been experimentally proven.

Its subcellular location is the periplasm. It carries out the reaction heme b + 2 H(+) = protoporphyrin IX + Fe(2+). In terms of biological role, involved in the recovery of exogenous heme iron. Extracts iron from heme while preserving the protoporphyrin ring intact. This chain is Deferrochelatase (efeB), found in Escherichia coli O6:H1 (strain CFT073 / ATCC 700928 / UPEC).